The primary structure comprises 179 residues: Large ribosomal subunit protein uL6 (179 aa).

Belongs to the universal ribosomal protein uL6 family. In terms of assembly, part of the 50S ribosomal subunit.

In terms of biological role, this protein binds to the 23S rRNA, and is important in its secondary structure. It is located near the subunit interface in the base of the L7/L12 stalk, and near the tRNA binding site of the peptidyltransferase center. The polypeptide is Large ribosomal subunit protein uL6 (Mycobacterium avium (strain 104)).